Here is a 62-residue protein sequence, read N- to C-terminus: Photosystem II reaction center protein Z (62 aa).

2 consecutive transmembrane segments (helical) span residues 8 to 28 (AVFALIATSSLLLISVPVVFA) and 41 to 61 (FSGTSLWIGLVFLVGILNSLI).

This sequence belongs to the PsbZ family. PSII is composed of 1 copy each of membrane proteins PsbA, PsbB, PsbC, PsbD, PsbE, PsbF, PsbH, PsbI, PsbJ, PsbK, PsbL, PsbM, PsbT, PsbY, PsbZ, Psb30/Ycf12, at least 3 peripheral proteins of the oxygen-evolving complex and a large number of cofactors. It forms dimeric complexes.

It localises to the plastid. It is found in the chloroplast thylakoid membrane. May control the interaction of photosystem II (PSII) cores with the light-harvesting antenna, regulates electron flow through the 2 photosystem reaction centers. PSII is a light-driven water plastoquinone oxidoreductase, using light energy to abstract electrons from H(2)O, generating a proton gradient subsequently used for ATP formation. The protein is Photosystem II reaction center protein Z of Oenothera elata subsp. hookeri (Hooker's evening primrose).